Reading from the N-terminus, the 78-residue chain is uncharacterized protein (78 aa).

This is an uncharacterized protein from Escherichia coli (strain K12).